The following is a 96-amino-acid chain: Co-chaperonin GroES (96 aa).

This sequence belongs to the GroES chaperonin family. In terms of assembly, heptamer of 7 subunits arranged in a ring. Interacts with the chaperonin GroEL.

The protein resides in the cytoplasm. Its function is as follows. Together with the chaperonin GroEL, plays an essential role in assisting protein folding. The GroEL-GroES system forms a nano-cage that allows encapsulation of the non-native substrate proteins and provides a physical environment optimized to promote and accelerate protein folding. GroES binds to the apical surface of the GroEL ring, thereby capping the opening of the GroEL channel. The chain is Co-chaperonin GroES from Shewanella amazonensis (strain ATCC BAA-1098 / SB2B).